Here is a 205-residue protein sequence, read N- to C-terminus: Small ribosomal subunit protein uS4 (205 aa).

The 59-residue stretch at 91-149 (MRLDALVLRAAFARSISQARQLVVHRHILVDGKLVDRPSYSVSPGQTVKVKPKSVPLDP) folds into the S4 RNA-binding domain.

The protein belongs to the universal ribosomal protein uS4 family. As to quaternary structure, part of the 30S ribosomal subunit. Contacts protein S5. The interaction surface between S4 and S5 is involved in control of translational fidelity.

Functionally, one of the primary rRNA binding proteins, it binds directly to 16S rRNA where it nucleates assembly of the body of the 30S subunit. Its function is as follows. With S5 and S12 plays an important role in translational accuracy. This chain is Small ribosomal subunit protein uS4, found in Tropheryma whipplei (strain TW08/27) (Whipple's bacillus).